A 140-amino-acid chain; its full sequence is Nucleoside diphosphate kinase (140 aa).

Positions 11, 59, 87, 93, 104, and 114 each coordinate ATP. Residue His-117 is the Pros-phosphohistidine intermediate of the active site.

This sequence belongs to the NDK family. In terms of assembly, homotetramer. It depends on Mg(2+) as a cofactor.

The protein localises to the cytoplasm. It catalyses the reaction a 2'-deoxyribonucleoside 5'-diphosphate + ATP = a 2'-deoxyribonucleoside 5'-triphosphate + ADP. It carries out the reaction a ribonucleoside 5'-diphosphate + ATP = a ribonucleoside 5'-triphosphate + ADP. Major role in the synthesis of nucleoside triphosphates other than ATP. The ATP gamma phosphate is transferred to the NDP beta phosphate via a ping-pong mechanism, using a phosphorylated active-site intermediate. In Rhizobium etli (strain CIAT 652), this protein is Nucleoside diphosphate kinase.